Consider the following 30-residue polypeptide: Rothein 3.4 (30 aa).

Leu-30 carries the leucine amide modification.

It belongs to the frog skin active peptide (FSAP) family. Rothein subfamily. As to expression, expressed by the skin dorsal glands.

The protein resides in the secreted. Lacks antimicrobial activity. Does not inhibit the formation of NO by neuronal nitric oxide. In Litoria rothii (Roth's tree frog), this protein is Rothein 3.4.